A 200-amino-acid polypeptide reads, in one-letter code: MTRKTRIQPIEHAAEVDDNGYDRPSKSQLKREMHELQVLGQALVDLPKDALKRMPMPESLSDAVREARRITDHEGKRRQLQYVGRVMRTLTDDETAALRTALDAQRGVNKAATARLHWIERTRDQLLANDDALTEFLRQHPDADIQEGRTLIRNARKEAQQGKPPRYFRELFQWIKTASGTPGGDDEAADEAGDDHDDEA.

2 disordered regions span residues 1–25 (MTRK…DRPS) and 177–200 (TASG…DDEA). Positions 12-25 (HAAEVDDNGYDRPS) are enriched in basic and acidic residues. A compositionally biased stretch (acidic residues) spans 184–200 (GDDEAADEAGDDHDDEA).

The protein belongs to the DarP family.

It is found in the cytoplasm. Its function is as follows. Member of a network of 50S ribosomal subunit biogenesis factors which assembles along the 30S-50S interface, preventing incorrect 23S rRNA structures from forming. Promotes peptidyl transferase center (PTC) maturation. The polypeptide is Dual-action ribosomal maturation protein DarP (Burkholderia ambifaria (strain MC40-6)).